A 456-amino-acid chain; its full sequence is 26S proteasome non-ATPase regulatory subunit 12 (456 aa).

An N-acetylalanine modification is found at Ala-2. Lys-92 participates in a covalent cross-link: Glycyl lysine isopeptide (Lys-Gly) (interchain with G-Cter in SUMO1); alternate. Lys-92 is covalently cross-linked (Glycyl lysine isopeptide (Lys-Gly) (interchain with G-Cter in SUMO2); alternate). N6-acetyllysine occurs at positions 221 and 368. One can recognise a PCI domain in the interval 242 to 420 (SICKHYRAIY…GIINFQRPKD (179 aa)).

Belongs to the proteasome subunit p55 family. Component of the 19S proteasome regulatory particle complex. The 26S proteasome consists of a 20S core particle (CP) and two 19S regulatory subunits (RP). The regulatory particle is made of a lid composed of 9 subunits including PSMD12, a base containing 6 ATPases and few additional components. Interacts with ERCC6.

Its function is as follows. Component of the 26S proteasome, a multiprotein complex involved in the ATP-dependent degradation of ubiquitinated proteins. This complex plays a key role in the maintenance of protein homeostasis by removing misfolded or damaged proteins, which could impair cellular functions, and by removing proteins whose functions are no longer required. Therefore, the proteasome participates in numerous cellular processes, including cell cycle progression, apoptosis, or DNA damage repair. This is 26S proteasome non-ATPase regulatory subunit 12 (PSMD12) from Pongo abelii (Sumatran orangutan).